Here is a 179-residue protein sequence, read N- to C-terminus: Large ribosomal subunit protein uL5 (179 aa).

Belongs to the universal ribosomal protein uL5 family. As to quaternary structure, part of the 50S ribosomal subunit; part of the 5S rRNA/L5/L18/L25 subcomplex. Contacts the 5S rRNA and the P site tRNA. Forms a bridge to the 30S subunit in the 70S ribosome.

In terms of biological role, this is one of the proteins that bind and probably mediate the attachment of the 5S RNA into the large ribosomal subunit, where it forms part of the central protuberance. In the 70S ribosome it contacts protein S13 of the 30S subunit (bridge B1b), connecting the 2 subunits; this bridge is implicated in subunit movement. Contacts the P site tRNA; the 5S rRNA and some of its associated proteins might help stabilize positioning of ribosome-bound tRNAs. The chain is Large ribosomal subunit protein uL5 from Saccharophagus degradans (strain 2-40 / ATCC 43961 / DSM 17024).